The primary structure comprises 261 residues: Precorrin-6A synthase [deacetylating] (261 aa).

It carries out the reaction precorrin-5 + S-adenosyl-L-methionine + H2O = precorrin-6A + acetate + S-adenosyl-L-homocysteine + 2 H(+). The protein operates within cofactor biosynthesis; adenosylcobalamin biosynthesis; cob(II)yrinate a,c-diamide from precorrin-2 (aerobic route): step 5/10. Catalyzes the methylation of C-1 in precorrin-5 and the subsequent extrusion of acetic acid from the resulting intermediate to form cobalt-precorrin-6A. In Sinorhizobium sp, this protein is Precorrin-6A synthase [deacetylating] (cobF).